A 955-amino-acid polypeptide reads, in one-letter code: Anion exchange protein 4 (955 aa).

Disordered stretches follow at residues 20-50 (VGQL…PEDP), 154-190 (HTQT…PLRQ), and 331-352 (PHRT…PELQ). A run of 4 helical transmembrane segments spans residues 387–407 (AVLY…GLLG), 415–435 (GVLE…LMAG), 472–492 (VGIW…SVLV), and 503–523 (FCAL…LNLA). The interval 387–955 (AVLYIYLATV…KAPEINISVN (569 aa)) is membrane (anion exchange). Residues Asn-548 and Asn-572 are each glycosylated (N-linked (GlcNAc...) asparagine). The next 7 membrane-spanning stretches (helical) occupy residues 596–616 (VPDI…FAIA), 637–657 (FSSI…GLAM), 684–704 (PWWL…LIFM), 730–750 (LFCV…WYVS), 785–804 (LTGL…APVL), 811–830 (VLYG…IQFM), and 871–891 (LWII…LGLV). The interval 918–955 (RNVPEKGLEPGHSFSGSDSEDSELMYQPKAPEINISVN) is disordered. N-linked (GlcNAc...) asparagine glycosylation occurs at Asn-951.

It belongs to the anion exchanger (TC 2.A.31) family. As to expression, highly expressed in kidney. Expressed in the outer medulla and the inner medulla in the kidney cortex. Only expressed in beta-intercalated cells.

The protein resides in the lateral cell membrane. It localises to the apical cell membrane. Its subcellular location is the basolateral cell membrane. It carries out the reaction 2 hydrogencarbonate(out) + chloride(in) + Na(+)(out) = 2 hydrogencarbonate(in) + chloride(out) + Na(+)(in). It catalyses the reaction K(+)(in) + 2 hydrogencarbonate(in) + chloride(out) = K(+)(out) + 2 hydrogencarbonate(out) + chloride(in). The enzyme catalyses Li(+)(in) + 2 hydrogencarbonate(in) + chloride(out) = Li(+)(out) + 2 hydrogencarbonate(out) + chloride(in). The catalysed reaction is Rb(+)(in) + 2 hydrogencarbonate(in) + chloride(out) = Rb(+)(out) + 2 hydrogencarbonate(out) + chloride(in). It carries out the reaction Cs(+)(in) + 2 hydrogencarbonate(in) + chloride(out) = Cs(+)(out) + 2 hydrogencarbonate(out) + chloride(in). In terms of biological role, electroneutral Cl(-)/HCO3(-) antiporter that favors chloride ion entry and efflux of hydrogencarbonate and sodium ion across the basolateral membrane and may participat in salivary secretion. Also mediates Cl(-)/HCO3(-) exchange activity in the presence of K(+) as well as Cs(+), Li(+), and Rb(+). Does not contribute to Cl(-)/HCO3(-) exchanger in the apical membrane of the upper villous epithelium. The chain is Anion exchange protein 4 from Oryctolagus cuniculus (Rabbit).